Consider the following 529-residue polypeptide: MWGACLLLLGLSLQVCPSVIPVEEENPAFWNRKAAEALDAAKKLKPIQTSAKNLVILMGDGMGVSTVTATRILKGQQQGHLGPETQLAMDRFPHMALSKTYNTDKQIPDSAGTGTAFLCGVKTNMKVIGLSAAARFNQCNTTWGNEVVSVMHRAKKAGKSVGVVTTTSVQHASPAGTYAHTVNRGWYSDAQMPASALQDGCKDISTQLISNMDIDVILGGGRKFMFPKGTPDQEYPTDTKQAGTRLDGRNLVQEWLAKHQGARYVWNRSELIQASLNRSVTHLMGLFEPNDMKYEIHRDPAQDPSLAEMTEVAVRMLSRNPKGFYLFVEGGRIDHGHHETVAYRALTEAVMFDSAVDKADKLTSEQDTMILVTADHSHVFSFGGYTQRGASIFGLAPFKAEDGKSFTSILYGNGPGYKLHNGARADVTEEESSNPTYQQQAAVPLSSETHSGEDVAIFARGPQAHLVHGVQEQNYIAHVMAFAACLEPYTDCGLASPAGQSSAVSPGYMSTLLCLLAGKMLMLMAAAEP.

Positions 1–18 (MWGACLLLLGLSLQVCPS) are cleaved as a signal peptide. Aspartate 60 is a binding site for Mg(2+). Aspartate 60 and serine 110 together coordinate Zn(2+). The active-site Phosphoserine intermediate is serine 110. Cysteine 139 and cysteine 201 are oxidised to a cystine. The N-linked (GlcNAc...) asparagine glycan is linked to asparagine 140. Residue serine 173 coordinates Mg(2+). Residue glutamate 234 coordinates Ca(2+). 2 N-linked (GlcNAc...) asparagine glycosylation sites follow: asparagine 267 and asparagine 277. 3 residues coordinate Ca(2+): phenylalanine 287, glutamate 288, and aspartate 303. Glutamate 329 contacts Mg(2+). Positions 334, 338, 375, 376, and 450 each coordinate Zn(2+). Cysteine 485 and cysteine 492 form a disulfide bridge. Serine 502 carries the GPI-anchor amidated serine lipid modification. Positions 503 to 529 (AVSPGYMSTLLCLLAGKMLMLMAAAEP) are cleaved as a propeptide — removed in mature form.

It belongs to the alkaline phosphatase family. In terms of assembly, homodimer. Requires Mg(2+) as cofactor. It depends on Zn(2+) as a cofactor. Ca(2+) serves as cofactor. Embryo and testis.

It localises to the cell membrane. The enzyme catalyses a phosphate monoester + H2O = an alcohol + phosphate. Its activity is regulated as follows. Inhibited by L-leucine, EDTA and heat. Its function is as follows. Alkaline phosphatase that can hydrolyze various phosphate compounds. This is Alkaline phosphatase, germ cell type (Alpg) from Mus musculus (Mouse).